We begin with the raw amino-acid sequence, 301 residues long: Prohibitin-2 (301 aa).

Necessary for transcriptional repression stretches follow at residues 19-49 (VGTA…GQRA) and 150-174 (ASQL…RAKD). A coiled-coil region spans residues 190-237 (SREYTAAVEAKQVAQQEAQRAQFLVEKAKQEQKQKIVQAEGEATAAKM).

Belongs to the prohibitin family. As to quaternary structure, the mitochondrial prohibitin complex consists of two subunits (PHB1 and PHB2), assembled into a membrane-associated ring-shaped supercomplex of approximately 1 mDa.

The protein resides in the mitochondrion inner membrane. It is found in the cytoplasm. The protein localises to the nucleus. It localises to the cell membrane. Protein with pleiotropic attributes mediated in a cell-compartment- and tissue-specific manner, which include the plasma membrane-associated cell signaling functions, mitochondrial chaperone, and transcriptional co-regulator of transcription factors and sex steroid hormones in the nucleus. Functionally, in the mitochondria, together with PHB, forms large ring complexes (prohibitin complexes) in the inner mitochondrial membrane (IMM) and functions as a chaperone protein that stabilizes mitochondrial respiratory enzymes and maintains mitochondrial integrity in the IMM, which is required for mitochondrial morphogenesis, neuronal survival, and normal lifespan. In terms of biological role, in the nucleus, serves as transcriptional co-regulator. The protein is Prohibitin-2 (PHB2) of Gallus gallus (Chicken).